The chain runs to 211 residues: Large ribosomal subunit protein eL13 (211 aa).

Residue Lys16 is modified to N6-acetyllysine. Phosphoserine is present on residues Ser52, Ser77, and Ser106. Residues Lys123 and Lys145 each participate in a glycyl lysine isopeptide (Lys-Gly) (interchain with G-Cter in SUMO2) cross-link. Lys174 is covalently cross-linked (Glycyl lysine isopeptide (Lys-Gly) (interchain with G-Cter in SUMO1); alternate). Residues Lys174 and Lys177 each participate in a glycyl lysine isopeptide (Lys-Gly) (interchain with G-Cter in SUMO2); alternate cross-link. At Lys177 the chain carries N6-acetyllysine; alternate.

Belongs to the eukaryotic ribosomal protein eL13 family. In terms of assembly, component of the 60S large ribosomal subunit (LSU). As to expression, higher levels of expression in benign breast lesions than in carcinomas.

Its subcellular location is the cytoplasm. In terms of biological role, component of the ribosome, a large ribonucleoprotein complex responsible for the synthesis of proteins in the cell. The small ribosomal subunit (SSU) binds messenger RNAs (mRNAs) and translates the encoded message by selecting cognate aminoacyl-transfer RNA (tRNA) molecules. The large subunit (LSU) contains the ribosomal catalytic site termed the peptidyl transferase center (PTC), which catalyzes the formation of peptide bonds, thereby polymerizing the amino acids delivered by tRNAs into a polypeptide chain. The nascent polypeptides leave the ribosome through a tunnel in the LSU and interact with protein factors that function in enzymatic processing, targeting, and the membrane insertion of nascent chains at the exit of the ribosomal tunnel. As part of the LSU, it is probably required for its formation and the maturation of rRNAs. Plays a role in bone development. This chain is Large ribosomal subunit protein eL13 (RPL13), found in Homo sapiens (Human).